Consider the following 97-residue polypeptide: Aspartyl/glutamyl-tRNA(Asn/Gln) amidotransferase subunit C (97 aa).

This sequence belongs to the GatC family. Heterotrimer of A, B and C subunits.

The catalysed reaction is L-glutamyl-tRNA(Gln) + L-glutamine + ATP + H2O = L-glutaminyl-tRNA(Gln) + L-glutamate + ADP + phosphate + H(+). It carries out the reaction L-aspartyl-tRNA(Asn) + L-glutamine + ATP + H2O = L-asparaginyl-tRNA(Asn) + L-glutamate + ADP + phosphate + 2 H(+). Allows the formation of correctly charged Asn-tRNA(Asn) or Gln-tRNA(Gln) through the transamidation of misacylated Asp-tRNA(Asn) or Glu-tRNA(Gln) in organisms which lack either or both of asparaginyl-tRNA or glutaminyl-tRNA synthetases. The reaction takes place in the presence of glutamine and ATP through an activated phospho-Asp-tRNA(Asn) or phospho-Glu-tRNA(Gln). This is Aspartyl/glutamyl-tRNA(Asn/Gln) amidotransferase subunit C from Anaeromyxobacter sp. (strain K).